The sequence spans 149 residues: 3-dehydroquinate dehydratase (149 aa).

Y25 acts as the Proton acceptor in catalysis. Substrate contacts are provided by N76, H82, and D89. H102 functions as the Proton donor in the catalytic mechanism. Substrate contacts are provided by residues 103 to 104 (LS) and R113.

It belongs to the type-II 3-dehydroquinase family. As to quaternary structure, homododecamer.

It carries out the reaction 3-dehydroquinate = 3-dehydroshikimate + H2O. Its pathway is metabolic intermediate biosynthesis; chorismate biosynthesis; chorismate from D-erythrose 4-phosphate and phosphoenolpyruvate: step 3/7. Catalyzes a trans-dehydration via an enolate intermediate. The polypeptide is 3-dehydroquinate dehydratase (Acaryochloris marina (strain MBIC 11017)).